The chain runs to 410 residues: Exopolygalacturonase (410 aa).

The signal sequence occupies residues 1-22 (MACIDNAMRALFLLALFCVVHG). N89 and N201 each carry an N-linked (GlcNAc...) asparagine glycan. PbH1 repeat units follow at residues 192–218 (CKDMLIKDVNVTAPGDSPNTDGIHMGD), 219–240 (SSGVTITNTVIGVGDDCISIGP), 242–262 (TSKVNITGVTCGPGHGISIGS), 272–293 (VTDINVKDCTLKKTANGVRIKA), and 337–377 (ASKV…TMDD). The active-site Proton donor is the D233. An intrachain disulfide couples C235 to C252. A glycan (N-linked (GlcNAc...) asparagine) is linked at N246. H256 is an active-site residue. Residue N349 is glycosylated (N-linked (GlcNAc...) asparagine). C364 and C370 form a disulfide bridge. An N-linked (GlcNAc...) asparagine glycan is attached at N387. A disulfide bridge links C393 with C409.

Belongs to the glycosyl hydrolase 28 family. In terms of tissue distribution, pollen.

It is found in the secreted. Its subcellular location is the cell wall. The catalysed reaction is [(1-&gt;4)-alpha-D-galacturonosyl](n) + H2O = alpha-D-galacturonate + [(1-&gt;4)-alpha-D-galacturonosyl](n-1). Functionally, may function in depolymerizing pectin during pollen development, germination, and tube growth. Acts as an exo-polygalacturonase. This chain is Exopolygalacturonase (PG2C), found in Zea mays (Maize).